The primary structure comprises 729 residues: Phosphoribosylformylglycinamidine synthase subunit PurL (729 aa).

His54 is a catalytic residue. Residues Tyr57 and Lys96 each contribute to the ATP site. Residue Glu98 participates in Mg(2+) binding. Substrate is bound by residues 99–102 (SHNH) and Arg121. His100 functions as the Proton acceptor in the catalytic mechanism. Asp122 is a Mg(2+) binding site. Gln245 serves as a coordination point for substrate. Asp273 serves as a coordination point for Mg(2+). 317 to 319 (ETQ) lines the substrate pocket. Positions 495 and 532 each coordinate ATP. Asn533 contributes to the Mg(2+) binding site. Ser535 contacts substrate.

Belongs to the FGAMS family. Monomer. Part of the FGAM synthase complex composed of 1 PurL, 1 PurQ and 2 PurS subunits.

It localises to the cytoplasm. The enzyme catalyses N(2)-formyl-N(1)-(5-phospho-beta-D-ribosyl)glycinamide + L-glutamine + ATP + H2O = 2-formamido-N(1)-(5-O-phospho-beta-D-ribosyl)acetamidine + L-glutamate + ADP + phosphate + H(+). It participates in purine metabolism; IMP biosynthesis via de novo pathway; 5-amino-1-(5-phospho-D-ribosyl)imidazole from N(2)-formyl-N(1)-(5-phospho-D-ribosyl)glycinamide: step 1/2. Part of the phosphoribosylformylglycinamidine synthase complex involved in the purines biosynthetic pathway. Catalyzes the ATP-dependent conversion of formylglycinamide ribonucleotide (FGAR) and glutamine to yield formylglycinamidine ribonucleotide (FGAM) and glutamate. The FGAM synthase complex is composed of three subunits. PurQ produces an ammonia molecule by converting glutamine to glutamate. PurL transfers the ammonia molecule to FGAR to form FGAM in an ATP-dependent manner. PurS interacts with PurQ and PurL and is thought to assist in the transfer of the ammonia molecule from PurQ to PurL. The protein is Phosphoribosylformylglycinamidine synthase subunit PurL of Staphylococcus aureus (strain bovine RF122 / ET3-1).